A 116-amino-acid polypeptide reads, in one-letter code: Phosphoribosyl-AMP cyclohydrolase (116 aa).

Asp85 contributes to the Mg(2+) binding site. Zn(2+) is bound at residue Cys86. The Mg(2+) site is built by Asp87 and Asp89. Residues Cys102 and Cys109 each coordinate Zn(2+).

This sequence belongs to the PRA-CH family. In terms of assembly, homodimer. It depends on Mg(2+) as a cofactor. Zn(2+) serves as cofactor.

It is found in the cytoplasm. The catalysed reaction is 1-(5-phospho-beta-D-ribosyl)-5'-AMP + H2O = 1-(5-phospho-beta-D-ribosyl)-5-[(5-phospho-beta-D-ribosylamino)methylideneamino]imidazole-4-carboxamide. The protein operates within amino-acid biosynthesis; L-histidine biosynthesis; L-histidine from 5-phospho-alpha-D-ribose 1-diphosphate: step 3/9. Its function is as follows. Catalyzes the hydrolysis of the adenine ring of phosphoribosyl-AMP. The sequence is that of Phosphoribosyl-AMP cyclohydrolase from Corynebacterium diphtheriae (strain ATCC 700971 / NCTC 13129 / Biotype gravis).